The chain runs to 513 residues: Na(+)/H(+) antiporter NhaB (513 aa).

The next 12 membrane-spanning stretches (helical) occupy residues 23–43, 52–72, 97–117, 120–140, 144–164, 202–222, 238–258, 303–323, 348–368, 391–411, 447–467, and 475–495; these read LALI…PFVA, IFTL…LLAI, LLLM…LFIF, LLLS…AAAF, FLDA…FYGI, LMMH…VGEP, FFLR…LTCL, AIIG…VGLI, TESL…AVII, LFYI…VGTI, ATPN…APLI, and VWMA…CVEF.

The protein belongs to the NhaB Na(+)/H(+) (TC 2.A.34) antiporter family.

It is found in the cell inner membrane. The catalysed reaction is 2 Na(+)(in) + 3 H(+)(out) = 2 Na(+)(out) + 3 H(+)(in). Functionally, na(+)/H(+) antiporter that extrudes sodium in exchange for external protons. This is Na(+)/H(+) antiporter NhaB from Escherichia coli O45:K1 (strain S88 / ExPEC).